The primary structure comprises 372 residues: Chaperone protein DnaJ (372 aa).

Residues aspartate 5–glycine 70 enclose the J domain. The CR-type zinc-finger motif lies at glycine 134 to lysine 211. Positions 147, 150, 163, 166, 185, 188, 199, and 202 each coordinate Zn(2+). CXXCXGXG motif repeat units follow at residues cysteine 147–glycine 154, cysteine 163–glycine 170, cysteine 185–glycine 192, and cysteine 199–glycine 206.

Belongs to the DnaJ family. As to quaternary structure, homodimer. The cofactor is Zn(2+).

It localises to the cytoplasm. Functionally, participates actively in the response to hyperosmotic and heat shock by preventing the aggregation of stress-denatured proteins and by disaggregating proteins, also in an autonomous, DnaK-independent fashion. Unfolded proteins bind initially to DnaJ; upon interaction with the DnaJ-bound protein, DnaK hydrolyzes its bound ATP, resulting in the formation of a stable complex. GrpE releases ADP from DnaK; ATP binding to DnaK triggers the release of the substrate protein, thus completing the reaction cycle. Several rounds of ATP-dependent interactions between DnaJ, DnaK and GrpE are required for fully efficient folding. Also involved, together with DnaK and GrpE, in the DNA replication of plasmids through activation of initiation proteins. This Aliarcobacter butzleri (strain RM4018) (Arcobacter butzleri) protein is Chaperone protein DnaJ.